A 283-amino-acid chain; its full sequence is 4-hydroxy-3-methylbut-2-enyl diphosphate reductase (283 aa).

Cys-12 provides a ligand contact to [4Fe-4S] cluster. Residues His-40 and His-73 each contribute to the (2E)-4-hydroxy-3-methylbut-2-enyl diphosphate site. 2 residues coordinate dimethylallyl diphosphate: His-40 and His-73. 2 residues coordinate isopentenyl diphosphate: His-40 and His-73. Residue Cys-95 participates in [4Fe-4S] cluster binding. His-123 contacts (2E)-4-hydroxy-3-methylbut-2-enyl diphosphate. His-123 contacts dimethylallyl diphosphate. His-123 is an isopentenyl diphosphate binding site. Residue Glu-125 is the Proton donor of the active site. A (2E)-4-hydroxy-3-methylbut-2-enyl diphosphate-binding site is contributed by Thr-161. Cys-189 is a binding site for [4Fe-4S] cluster. Residues Ser-217, Asn-219, and Ser-261 each contribute to the (2E)-4-hydroxy-3-methylbut-2-enyl diphosphate site. Dimethylallyl diphosphate-binding residues include Ser-217, Asn-219, and Ser-261. Isopentenyl diphosphate is bound by residues Ser-217, Asn-219, and Ser-261.

It belongs to the IspH family. [4Fe-4S] cluster is required as a cofactor.

The enzyme catalyses isopentenyl diphosphate + 2 oxidized [2Fe-2S]-[ferredoxin] + H2O = (2E)-4-hydroxy-3-methylbut-2-enyl diphosphate + 2 reduced [2Fe-2S]-[ferredoxin] + 2 H(+). It carries out the reaction dimethylallyl diphosphate + 2 oxidized [2Fe-2S]-[ferredoxin] + H2O = (2E)-4-hydroxy-3-methylbut-2-enyl diphosphate + 2 reduced [2Fe-2S]-[ferredoxin] + 2 H(+). It functions in the pathway isoprenoid biosynthesis; dimethylallyl diphosphate biosynthesis; dimethylallyl diphosphate from (2E)-4-hydroxy-3-methylbutenyl diphosphate: step 1/1. It participates in isoprenoid biosynthesis; isopentenyl diphosphate biosynthesis via DXP pathway; isopentenyl diphosphate from 1-deoxy-D-xylulose 5-phosphate: step 6/6. In terms of biological role, catalyzes the conversion of 1-hydroxy-2-methyl-2-(E)-butenyl 4-diphosphate (HMBPP) into a mixture of isopentenyl diphosphate (IPP) and dimethylallyl diphosphate (DMAPP). Acts in the terminal step of the DOXP/MEP pathway for isoprenoid precursor biosynthesis. The sequence is that of 4-hydroxy-3-methylbut-2-enyl diphosphate reductase from Citrifermentans bemidjiense (strain ATCC BAA-1014 / DSM 16622 / JCM 12645 / Bem) (Geobacter bemidjiensis).